A 1410-amino-acid polypeptide reads, in one-letter code: Pogo transposable element with ZNF domain (1410 aa).

The segment at 238 to 291 (RSTVPQSQSQQTKSTPSTSTTPTATQPTSLGQLAVQSPGQSNQTTNPKLAPSFP) is disordered. Positions 239–266 (STVPQSQSQQTKSTPSTSTTPTATQPTS) are enriched in low complexity. Positions 267 to 284 (LGQLAVQSPGQSNQTTNP) are enriched in polar residues. A Glycyl lysine isopeptide (Lys-Gly) (interchain with G-Cter in SUMO2) cross-link involves residue Lys319. The disordered stretch occupies residues 332–361 (QSPGPVVVSNNSSAHGSQRTSGPESSMKVT). Ser333 carries the phosphoserine modification. A compositionally biased stretch (polar residues) spans 345 to 361 (AHGSQRTSGPESSMKVT). Lys359 participates in a covalent cross-link: Glycyl lysine isopeptide (Lys-Gly) (interchain with G-Cter in SUMO2). The residue at position 363 (Ser363) is a Phosphoserine. The C2H2-type 1; atypical zinc finger occupies 375-397 (KICPRCNAQFRVTEALRGHMCYC). The disordered stretch occupies residues 409 to 456 (KSLDSEPSVPSAAKPPSPEKTAPVASTPSSTPIPALSPPTKVPEPNEN). Lys422 is covalently cross-linked (Glycyl lysine isopeptide (Lys-Gly) (interchain with G-Cter in SUMO2)). Ser425 carries the post-translational modification Phosphoserine. Thr439 is subject to Phosphothreonine. Ser445 carries the phosphoserine modification. Lys449 participates in a covalent cross-link: Glycyl lysine isopeptide (Lys-Gly) (interchain with G-Cter in SUMO2). Thr463 is modified (phosphothreonine). Lys489 participates in a covalent cross-link: Glycyl lysine isopeptide (Lys-Gly) (interchain with G-Cter in SUMO2). 6 consecutive C2H2-type zinc fingers follow at residues 494 to 516 (FRCP…MKHH), 530 to 553 (TICQ…ENVH), 560 to 583 (TKCK…KDTH), 590 to 613 (YVCQ…RMIH), 619 to 641 (LLCP…YMRH), and 647 to 670 (YHCN…LQHH). Residue Lys629 forms a Glycyl lysine isopeptide (Lys-Gly) (interchain with G-Cter in SUMO2) linkage. Lys677 is covalently cross-linked (Glycyl lysine isopeptide (Lys-Gly) (interchain with G-Cter in SUMO2)). The disordered stretch occupies residues 693–715 (SRGQPRTVPVSSNDTPPSALQEA). Residues 701 to 710 (PVSSNDTPPS) show a composition bias toward polar residues. The C2H2-type 8 zinc-finger motif lies at 771 to 794 (VHCSLCRYSTCCSRAYANHMINNH). Residue Lys801 forms a Glycyl lysine isopeptide (Lys-Gly) (interchain with G-Cter in SUMO2) linkage. The required for interaction with CBX5 stretch occupies residues 810-850 (VSGIKLACTSCTFVTSVGDAMAKHLVFNPSHRSSSILPRGL). Residues 815–840 (LACTSCTFVTSVGDAMAKHLVFNPSH) form a C2H2-type 9 zinc finger. Ser856 is modified (phosphoserine). 2 disordered regions span residues 857–927 (RHGQ…PQAL) and 942–969 (VDDQ…GVGK). Residues 860–870 (QTRDRVHDRNV) are compositionally biased toward basic and acidic residues. Residue Lys883 forms a Glycyl lysine isopeptide (Lys-Gly) (interchain with G-Cter in SUMO2) linkage. Over residues 892 to 915 (ATPAEPEELLTPLAPALPSPASTA) the composition is skewed to low complexity. The region spanning 1015-1085 (GENLEGKYLS…MLRHHLTPHA (71 aa)) is the HTH CENPB-type domain. One can recognise a DDE-1 domain in the interval 1117-1323 (LPLSMIVAID…DCPELVQRSF (207 aa)). Phosphoserine is present on Ser1338. The stretch at 1340-1360 (TRNADMQEELIASLEEQLKLS) forms a coiled coil. The disordered stretch occupies residues 1360–1400 (SGEHSESSTPRPRSSPEETIEPESLHQLFEGESETESFYGF). 2 positions are modified to phosphoserine: Ser1364 and Ser1367. Thr1368 bears the Phosphothreonine mark. Phosphoserine occurs at positions 1373 and 1374. The residue at position 1378 (Thr1378) is a Phosphothreonine. An Integrase domain-binding motif (IBM) motif is present at residues 1380–1404 (EPESLHQLFEGESETESFYGFEEAD). Residue Ser1392 is modified to Phosphoserine; by CK2. Residue Thr1394 is modified to Phosphothreonine. Phosphoserine; by CK2 is present on Ser1396.

Interacts with CBX1, CBX3, MAD2L2 and CHAMP1. Interacts with CBX5; POGZ competes with PXVXL motif-containing proteins such as INCENP and TRIM28 for interaction with CBX5. Interacts (via IBM motif) with PSIP1 isoform 1 (via IBD domain); phosphorylation increases its affinity for PSIP1. Interacts with HDGFL2. Post-translationally, phosphorylation increases its interaction with PSIP1.

The protein resides in the nucleus. It is found in the chromosome. It localises to the cytoplasm. Plays a role in mitotic cell cycle progression and is involved in kinetochore assembly and mitotic sister chromatid cohesion. Probably through its association with CBX5 plays a role in mitotic chromosome segregation by regulating aurora kinase B/AURKB activation and AURKB and CBX5 dissociation from chromosome arms. Promotes the repair of DNA double-strand breaks through the homologous recombination pathway. This chain is Pogo transposable element with ZNF domain (POGZ), found in Homo sapiens (Human).